Here is a 781-residue protein sequence, read N- to C-terminus: Transcription factor Sp3 (781 aa).

The segment covering 1–12 (MTAPEKPVKQEE) has biased composition (basic and acidic residues). Disordered stretches follow at residues 1–53 (MTAP…AAQD) and 65–88 (TCSK…AGAP). Residues 20–31 (SGGGGGGGGGHG) are compositionally biased toward gly residues. Positions 32–53 (EYLQQQQQHGNGAVAAAAAAQD) are enriched in low complexity. Serine 73 is modified (phosphoserine). A Glycyl lysine isopeptide (Lys-Gly) (interchain with G-Cter in SUMO) cross-link involves residue lysine 120. The interval 138–237 (QYVLPLQNLQ…IPQTGQVQVQ (100 aa)) is transactivation domain (Gln-rich). A disordered region spans residues 301 to 338 (QAMDSSDNSERTGERVSPDINETNTDTDLFVPTSSSSQ). Residues 308-317 (NSERTGERVS) are compositionally biased toward basic and acidic residues. Polar residues predominate over residues 320–338 (INETNTDTDLFVPTSSSSQ). Positions 350 to 499 (QQNTNSLTTS…TPVQTLTLGQ (150 aa)) are transactivation domain (Gln-rich). A 9aaTAD motif is present at residues 461–469 (VTWQTFQVQ). The interval 534-620 (IQLHPGENAD…RGTNLGKKKQ (87 aa)) is repressor domain. Lysine 551 is subject to N6-acetyllysine; alternate. A Glycyl lysine isopeptide (Lys-Gly) (interchain with G-Cter in SUMO); alternate cross-link involves residue lysine 551. Lysine 551 participates in a covalent cross-link: Glycyl lysine isopeptide (Lys-Gly) (interchain with G-Cter in SUMO1); alternate. A Glycyl lysine isopeptide (Lys-Gly) (interchain with G-Cter in SUMO2); alternate cross-link involves residue lysine 551. 2 positions are modified to phosphoserine: serine 563 and serine 566. A Glycyl lysine isopeptide (Lys-Gly) (interchain with G-Cter in SUMO2) cross-link involves residue lysine 593. A C2H2-type 1 zinc finger spans residues 621 to 645 (HICHIPGCGKVYGKTSHLRAHLRWH). Serine 646 is modified (phosphoserine). 2 C2H2-type zinc fingers span residues 651 to 675 (FVCN…RRTH) and 681 to 703 (FVCP…IKTH).

Belongs to the Sp1 C2H2-type zinc-finger protein family. Interacts with HLTF; the interaction may be required for basal transcriptional activity of HLTF. Interacts with HDAC1; the interaction deacetylates SP3 and regulates its transcriptional activity. Interacts with HDAC2 (preferably the CK2-phosphorylated form); the interaction deacetylates SP3 and regulates its transcriptional activity. Interacts with MEIS2 isoform 4 and PBX1 isoform PBX1a. Post-translationally, not glycosylated. In terms of processing, acetylated by histone acetyltransferase p300, deacetylated by HDACs. Acetylation/deacetylation states regulate transcriptional activity. Acetylation appears to activate transcription. Alternate sumoylation and acetylation at Lys-551 also control transcriptional activity. Ceramides can also regulate acetylation/deacetylation events through altering the interaction of HDAC with SP3. In vitro, C(18)-ceramides, but not C(16)-ceramides, increase the interaction of HDAC1 with SP3 and enhance the deacetylation of SP3 and the subsequent repression of the TERT promoter. Sumoylated on all isoforms. Sumoylated on 2 sites in longer isoforms with Lys-551 being the major site. Sumoylation at this site promotes nuclear localization to the nuclear periphery, nuclear dots and PML nuclear bodies. Sumoylation on Lys-551 represses the transactivation activity, except for the largest isoform, L-Sp3, which has little effect on transactivation. Alternate sumoylation and acetylation at Lys-551 also control transcriptional activity. Ubiquitously expressed.

The protein localises to the nucleus. Its subcellular location is the PML body. In terms of biological role, transcriptional factor that can act as an activator or repressor depending on isoform and/or post-translational modifications. Binds to GT and GC boxes promoter elements. Competes with SP1 for the GC-box promoters. Weak activator of transcription but can activate a number of genes involved in different processes such as cell-cycle regulation, hormone-induction and house-keeping. The chain is Transcription factor Sp3 (SP3) from Homo sapiens (Human).